The following is a 419-amino-acid chain: Tyrosine--tRNA ligase (419 aa).

Tyr-42 lines the L-tyrosine pocket. The short motif at 47 to 56 is the 'HIGH' region element; the sequence is ATAPSLHVGS. Residues Tyr-179 and Gln-183 each contribute to the L-tyrosine site. Residues 239-243 carry the 'KMSKS' region motif; the sequence is KMGKT. Lys-242 is a binding site for ATP. Residues 353–418 form the S4 RNA-binding domain; the sequence is IVLANLFADA…GKKKIVLVKP (66 aa).

It belongs to the class-I aminoacyl-tRNA synthetase family. TyrS type 1 subfamily. In terms of assembly, homodimer.

It localises to the cytoplasm. It carries out the reaction tRNA(Tyr) + L-tyrosine + ATP = L-tyrosyl-tRNA(Tyr) + AMP + diphosphate + H(+). Its function is as follows. Catalyzes the attachment of tyrosine to tRNA(Tyr) in a two-step reaction: tyrosine is first activated by ATP to form Tyr-AMP and then transferred to the acceptor end of tRNA(Tyr). The protein is Tyrosine--tRNA ligase of Caulobacter sp. (strain K31).